The chain runs to 336 residues: Anthranilate phosphoribosyltransferase (336 aa).

Residues G81, 84-85, S89, 91-94, 109-117, and A121 contribute to the 5-phospho-alpha-D-ribose 1-diphosphate site; these read GD, NIST, and KHGNRGLSS. Residue G81 participates in anthranilate binding. A Mg(2+)-binding site is contributed by S93. Anthranilate is bound at residue N112. An anthranilate-binding site is contributed by R167. Residues D225 and E226 each contribute to the Mg(2+) site.

The protein belongs to the anthranilate phosphoribosyltransferase family. As to quaternary structure, homodimer. Mg(2+) is required as a cofactor.

The enzyme catalyses N-(5-phospho-beta-D-ribosyl)anthranilate + diphosphate = 5-phospho-alpha-D-ribose 1-diphosphate + anthranilate. The protein operates within amino-acid biosynthesis; L-tryptophan biosynthesis; L-tryptophan from chorismate: step 2/5. Catalyzes the transfer of the phosphoribosyl group of 5-phosphorylribose-1-pyrophosphate (PRPP) to anthranilate to yield N-(5'-phosphoribosyl)-anthranilate (PRA). The protein is Anthranilate phosphoribosyltransferase of Mesorhizobium japonicum (strain LMG 29417 / CECT 9101 / MAFF 303099) (Mesorhizobium loti (strain MAFF 303099)).